The following is a 92-amino-acid chain: Small ribosomal subunit protein uS19c (92 aa).

The protein belongs to the universal ribosomal protein uS19 family.

The protein resides in the plastid. Its subcellular location is the chloroplast. Functionally, protein S19 forms a complex with S13 that binds strongly to the 16S ribosomal RNA. The protein is Small ribosomal subunit protein uS19c of Liriodendron tulipifera (Tuliptree).